A 353-amino-acid chain; its full sequence is MPKNLRFSVFLLFLLCINSVFGEFGPEDAQYNETEARMLLSLSAAAYSLDVTPCIGRTFSPAENQTLLSTFSVRCDFVGNPCAGYIVVSDVLQQITVVFRGTKTSSQLLLEGWTTLKPSSDFYGMGLVNTYFRSGHEKTWQYVQDALSISQYRNYDVYVTGHSLGGALAGLCAPRIVHDGLRQSQKIKVVTFGEPRVGNIEFSRAYDQLVPYSFRVVHSGDVVPHLPGCVKDLSYTPPAGSDGSMPCDPVSTNGGYHHAIEIWYPGNMTQGDPFMVCTGLPRDEDFGCSDSLKVNLGDTNQGVWDHRNYFGVEVPDFGKGGCDPSMTFKGPPTKTGVLSLVGSVFGRKRRSIR.

An N-terminal signal peptide occupies residues 1–22 (MPKNLRFSVFLLFLLCINSVFG). 2 N-linked (GlcNAc...) asparagine glycosylation sites follow: asparagine 32 and asparagine 64. Serine 163 (nucleophile) is an active-site residue. Aspartate 221 serves as the catalytic Charge relay system. Asparagine 267 carries N-linked (GlcNAc...) asparagine glycosylation. An intrachain disulfide couples cysteine 277 to cysteine 288. The Charge relay system role is filled by histidine 306.

This sequence belongs to the AB hydrolase superfamily. Lipase family.

The protein resides in the secreted. Functionally, probable lipase. In Caenorhabditis elegans, this protein is Lipase ZK262.3.